An 871-amino-acid polypeptide reads, in one-letter code: Serrate RNA effector molecule homolog (871 aa).

The disordered stretch occupies residues 1–90 (MGDSDDEYDR…RRDWDGHSSD (90 aa)). N-acetylglycine is present on G2. S4 carries the phosphoserine modification. At Y8 the chain carries Phosphotyrosine. Over residues 8 to 73 (YDRRRRDKFR…ERFSPPRHEL (66 aa)) the composition is skewed to basic and acidic residues. S67, S74, and S136 each carry phosphoserine. A Glycyl lysine isopeptide (Lys-Gly) (interchain with G-Cter in SUMO2) cross-link involves residue K150. The disordered stretch occupies residues 272-411 (EEEEQAGKPG…KPKDAAGLEC (140 aa)). Residues 297–347 (DGERKTNDKDEKKEDSKQAENDSSNDDKTKKSEGDGDKEEKKEDSEKEAKK) show a composition bias toward basic and acidic residues. Acidic residues predominate over residues 370–385 (SESESESGQAEEEKEE). A compositionally biased stretch (basic and acidic residues) spans 386–411 (AEALKEKEKPKEEEWEKPKDAAGLEC). Phosphoserine is present on residues S492 and S539. Phosphothreonine is present on T543. S569 is modified (phosphoserine). Residues 574–597 (ELLGSSGGAPPEEPPKEGNPAEIN) are disordered. Position 670 is a phosphothreonine (T670). S678 carries the phosphoserine modification. Omega-N-methylarginine occurs at positions 828, 835, and 845. The disordered stretch occupies residues 830–849 (NYDAFRGQGGYPGKPRNRMV).

It belongs to the ARS2 family. In terms of assembly, interacts with CASP8AP2, ERBB4, NCBP1/CBP80 and DROSHA. Interacts with LUZP4. Interacts with NCBP2/CBP20 and NCBP3. Interacts with MTREX.

It is found in the nucleus. The protein localises to the nucleoplasm. Its subcellular location is the cytoplasm. Acts as a mediator between the cap-binding complex (CBC) and the primary microRNAs (miRNAs) processing machinery during cell proliferation. Contributes to the stability and delivery of capped primary miRNA transcripts to the primary miRNA processing complex containing DGCR8 and DROSHA, thereby playing a role in RNA-mediated gene silencing (RNAi) by miRNAs. Binds capped RNAs (m7GpppG-capped RNA); however interaction is probably mediated via its interaction with NCBP1/CBP80 component of the CBC complex. Involved in cell cycle progression at S phase. Does not directly confer arsenite resistance but rather modulates arsenic sensitivity. Independently of its activity on miRNAs, necessary and sufficient to promote neural stem cell self-renewal. Does so by directly binding SOX2 promoter and positively regulating its transcription. This is Serrate RNA effector molecule homolog (SRRT) from Pongo abelii (Sumatran orangutan).